We begin with the raw amino-acid sequence, 341 residues long: Cell wall mannoprotein PIR1 (341 aa).

The N-terminal stretch at 1-18 (MQYKKSLVASALVATSLA) is a signal peptide. Residues 19–63 (AYAPKDPWSTLTPSATYKGGITDYSSTFGIAVEPIATTASSKAKR) constitute a propeptide that is removed on maturation. 8 PIR1/2/3 repeats span residues 64-82 (AAAI…TKTT), 83-101 (AAAV…TKTK), 102-120 (AAAV…TKTT), 126-144 (AAAV…TKTK), 145-163 (AAAV…TKTT), 164-182 (AAAV…TKTT), 183-201 (AAAV…TNTT), and 202-220 (VAPV…TLTS).

Belongs to the PIR protein family. Post-translationally, covalently linked to beta-1,3-glucan of the inner cell wall layer via an alkali-sensitive ester linkage between the gamma-carboxyl group of glutamic acids, arising from specific glutamines within the PIR1/2/3 repeats, and hydroxyl groups of glucoses of beta-1,3-glucan chains. O-glycosylated. Extensively O-mannosylated.

It is found in the secreted. The protein resides in the cell wall. In terms of biological role, component of the outer cell wall layer. Required for stability of the cell wall and for optimal growth. Required for resistance against several antifungal and cell wall-perturbing agents and for tolerance to heat shock. The protein is Cell wall mannoprotein PIR1 (PIR1) of Saccharomyces cerevisiae (strain YJM789) (Baker's yeast).